Here is a 501-residue protein sequence, read N- to C-terminus: ATP synthase subunit alpha (501 aa).

169–176 contacts ATP; that stretch reads GDRQTGKT.

It belongs to the ATPase alpha/beta chains family. As to quaternary structure, F-type ATPases have 2 components, CF(1) - the catalytic core - and CF(0) - the membrane proton channel. CF(1) has five subunits: alpha(3), beta(3), gamma(1), delta(1), epsilon(1). CF(0) has three main subunits: a(1), b(2) and c(9-12). The alpha and beta chains form an alternating ring which encloses part of the gamma chain. CF(1) is attached to CF(0) by a central stalk formed by the gamma and epsilon chains, while a peripheral stalk is formed by the delta and b chains.

The protein resides in the cell membrane. The enzyme catalyses ATP + H2O + 4 H(+)(in) = ADP + phosphate + 5 H(+)(out). Its function is as follows. Produces ATP from ADP in the presence of a proton gradient across the membrane. The alpha chain is a regulatory subunit. In Streptococcus equi subsp. equi (strain 4047), this protein is ATP synthase subunit alpha.